The chain runs to 59 residues: Large ribosomal subunit protein uL30 (59 aa).

This sequence belongs to the universal ribosomal protein uL30 family. In terms of assembly, part of the 50S ribosomal subunit.

The chain is Large ribosomal subunit protein uL30 from Citrobacter koseri (strain ATCC BAA-895 / CDC 4225-83 / SGSC4696).